The following is a 1234-amino-acid chain: Stress response protein NST1 (1234 aa).

Composition is skewed to polar residues over residues 1-10 and 21-31; these read MSDTTDSTSR and YDNQSQPTTSE. 7 disordered regions span residues 1–70, 149–175, 246–283, 513–608, 661–816, 924–945, and 1214–1234; these read MSDT…TSRV, KANNQSHHGHGANGTSSASGANSAANA, QQRMKHKRDHPASQNHTENPEVHGEHPHVQPQNFVNSR, TARE…EEEK, KKLK…ESQN, PNGLNSSTSNMSPWSSKSRLNS, and GNNSTNANGNSSNGGSRGLWN. The segment covering 39–51 has biased composition (basic residues); it reads NKKKKKKANKKHK. Over residues 161–175 the composition is skewed to low complexity; sequence NGTSSASGANSAANA. 2 stretches are compositionally biased toward basic and acidic residues: residues 263-273 and 513-527; these read ENPEVHGEHPH and TAREDLLKDPTKKDA. 2 stretches are compositionally biased toward acidic residues: residues 555 to 587 and 596 to 605; these read EYYEESEEDEEELSEEDEDDADDNGLNEDDDLV and ASDTESEISE. A coiled-coil region spans residues 633–826; the sequence is KEKLSEDRTQ…QLELESAQLP (194 aa). 2 stretches are compositionally biased toward basic and acidic residues: residues 661-670 and 679-806; these read KKLKQKEKAK and AKEE…KEQQ. Low complexity-rich tracts occupy residues 929–941 and 1214–1227; these read SSTSNMSPWSSKS and GNNSTNANGNSSNG.

This sequence belongs to the NST1 family.

Its subcellular location is the cytoplasm. In terms of biological role, may act as a negative regulator of salt tolerance. This chain is Stress response protein NST1 (NST1), found in Scheffersomyces stipitis (strain ATCC 58785 / CBS 6054 / NBRC 10063 / NRRL Y-11545) (Yeast).